We begin with the raw amino-acid sequence, 542 residues long: Chaperonin GroEL 2 (542 aa).

ATP contacts are provided by residues 30 to 33, K51, 87 to 91, G415, and D496; these read TLGP and DGTTT. The interval 523-542 is disordered; the sequence is AEKPKKDGQPQMPPAPGMDF. Residues 533–542 are compositionally biased toward pro residues; it reads QMPPAPGMDF.

This sequence belongs to the chaperonin (HSP60) family. In terms of assembly, forms a cylinder of 14 subunits composed of two heptameric rings stacked back-to-back. Interacts with the co-chaperonin GroES.

The protein localises to the cytoplasm. It catalyses the reaction ATP + H2O + a folded polypeptide = ADP + phosphate + an unfolded polypeptide.. In terms of biological role, together with its co-chaperonin GroES, plays an essential role in assisting protein folding. The GroEL-GroES system forms a nano-cage that allows encapsulation of the non-native substrate proteins and provides a physical environment optimized to promote and accelerate protein folding. The sequence is that of Chaperonin GroEL 2 from Sinorhizobium medicae (strain WSM419) (Ensifer medicae).